A 688-amino-acid chain; its full sequence is TBC1 domain family member 25 (688 aa).

A disordered region spans residues 1–27 (MATASGASDLSGSGAPPPGVGAQAAAA). A Phosphoserine modification is found at Ser140. Phosphothreonine is present on Thr160. The Rab-GAP TBC domain occupies 228 to 434 (GVEPSLRKVV…RMLEVTWSSL (207 aa)). The residue at position 506 (Ser506) is a Phosphoserine. A compositionally biased stretch (low complexity) spans 544–567 (LNSPDPLLSSFSHPDSPSSSSPPS). The disordered stretch occupies residues 544-606 (LNSPDPLLSS…LPPVPPMGLP (63 aa)). Residues 596–606 (SLPPVPPMGLP) are compositionally biased toward pro residues.

As to quaternary structure, interacts (via N-terminus) with MAP1LC3B, GABARAP and GABARAPL2.

Its subcellular location is the cytoplasm. The protein localises to the cytoplasmic vesicle. The protein resides in the autophagosome. In terms of biological role, acts as a GTPase-activating protein specific for RAB33B. Involved in the regulation of autophagosome maturation, the process in which autophagosomes fuse with endosomes and lysosomes. This chain is TBC1 domain family member 25 (TBC1D25), found in Homo sapiens (Human).